A 565-amino-acid polypeptide reads, in one-letter code: MEDSDSAAKQLGLAEAAAVAAAAAVAAAAAAAAGGEAEEPVLSRDEDSEEDADSEAERETPRVTAVAVMAAEPGHMDMGAEALPGPDETAAAAAFAEVTTVTVANVGAAADNVFTTSVANAASISGHVLSGRTALQIGDSLNTEKATLIVVHTDGSIVETTGLKGPAAPLTPGPQSPPTPLAPGQEKGGTKYNWDPSVYDSELPVRCRNISGTLYKNRLGSGGRGRCIKQGENWYSPTEFEAMAGRASSKDWKRSIRYAGRPLQCLIQDGILNPHAASCTCAACCDNMTLSGPVRLFVPYKRRKKENELPTTPVKKDSPKNITLLPATAATTFTVTPSGQITTSGALTFDRASTVEATAVISESPAQGDVFAGATVQEASVQPPCRASHPEPHYPGYQDSCQIAPFPEAALPTSHPKIVLTSLPALAVPPPTPTKAAPPALVNGLELSEPRSWLYLEEMVNSLLTTAQQLKTLFEQAKHASTYREAAANQAKIHADAERKEQSCVNCGREAMNECTGCHKVNYCSTFCQRKDWKDHQHICGQSAAVTVQADEVHVAESVMEKVTV.

2 disordered regions span residues 34–62 and 162–190; these read GGEA…ETPR and GLKG…KGGT. Over residues 169-181 the composition is skewed to pro residues; it reads PLTPGPQSPPTPL. Thr171 bears the Phosphothreonine mark. Ser176 bears the Phosphoserine mark. The residue at position 179 (Thr179) is a Phosphothreonine. In terms of domain architecture, SAND spans 193-273; it reads NWDPSVYDSE…QCLIQDGILN (81 aa). The short motif at 301 to 316 is the Nuclear localization signal element; sequence KRRKKENELPTTPVKK. The interval 403 to 478 is interaction with LMO4; sequence IAPFPEAALP…QLKTLFEQAK (76 aa). Thr432 bears the Phosphothreonine mark. The residue at position 448 (Ser448) is a Phosphoserine. Zn(2+) contacts are provided by Cys504, Cys507, Cys515, Cys518, Cys524, Cys528, His536, and Cys540. The MYND-type zinc finger occupies 504–540; sequence CVNCGREAMNECTGCHKVNYCSTFCQRKDWKDHQHIC.

Homodimer. Interacts with LMO4; LMO4 blocks export from nucleus. Interacts with LMO2 and CLIM2. May interact with the corepressors NCOR1 and NCRO2. Identified in a complex with XRCC5 and XRCC6. Interacts (via the SAND domain) with the DNA-PK complex subunit XRCC6; the interaction is direct and may be inhibited by DNA-binding. May be phosphorylated by DNA-PK complex in a DNA independent manner (in vitro).

Its subcellular location is the nucleus. Transcription factor that binds to sequence with multiple copies of 5'-TTC[CG]G-3' present in its own promoter and that of the HNRPA2B1 gene. Down-regulates transcription of these genes. Binds to the retinoic acid response element (RARE) 5'-AGGGTTCACCGAAAGTTCA-3'. Activates the proenkephalin gene independently of promoter binding, probably through protein-protein interaction. Regulates epithelial cell proliferation and side-branching in the mammary gland. Required for neural tube closure and skeletal patterning. Controls the expression of peripheral tissue antigens in pancreatic lymph nodes. Transcriptional activator of EIF4G3. May also involved in behavior. The chain is Deformed epidermal autoregulatory factor 1 homolog (DEAF1) from Pan troglodytes (Chimpanzee).